Here is a 484-residue protein sequence, read N- to C-terminus: Muscarinic acetylcholine receptor M4 (484 aa).

The Extracellular segment spans residues 1–32 (MENDTWENESSASNHSIDETIVEIPGKYQTME). Residues asparagine 3, asparagine 8, and asparagine 14 are each glycosylated (N-linked (GlcNAc...) asparagine). The helical transmembrane segment at 33-55 (MIFIATVTGSLSLVTVVGNILVM) threads the bilayer. The Cytoplasmic segment spans residues 56–69 (LSIKVNRQLQTVNN). A helical membrane pass occupies residues 70–90 (YFLFSLACADLIIGVFSMNLY). Residues 91–107 (SLYIIKGYWPLGPIVCD) lie on the Extracellular side of the membrane. A disulfide bond links cysteine 106 and cysteine 186. Residues 108–129 (LWLALDYVVSNASVMNLLIISL) form a helical membrane-spanning segment. At 130–149 (ERXFCVTKPLTYPARRTTKM) the chain is on the cytoplasmic side. A helical transmembrane segment spans residues 150-172 (AGLMIAAAWLLSFELWAPAILFW). Residues 173–194 (QFIVGQRTVPSGECYIQFLSNP) lie on the Extracellular side of the membrane. Residues 195 to 217 (AVTFGTAIAAFYLPVVIMTILYI) traverse the membrane as a helical segment. The Cytoplasmic segment spans residues 218 to 406 (HISLASRSRV…AAREKKVTRT (189 aa)). Residues 255-316 (NIPKQDAGDK…EKQPLSEASS (62 aa)) are disordered. The segment covering 260 to 270 (DAGDKVVEKKN) has biased composition (basic and acidic residues). The chain crosses the membrane as a helical span at residues 407-427 (IFAILLAFIITWTPYNVMVLI). Over 428–441 (NTFCQTCIPETIWY) the chain is Extracellular. The chain crosses the membrane as a helical span at residues 442-461 (IGYWLCYVNSTINPACYALC). Residues 462-484 (NATFKKTFKHLLMCQYKSIGTAR) lie on the Cytoplasmic side of the membrane.

Belongs to the G-protein coupled receptor 1 family. Muscarinic acetylcholine receptor subfamily. CHRM4 sub-subfamily.

The protein resides in the cell membrane. It localises to the postsynaptic cell membrane. In terms of biological role, the muscarinic acetylcholine receptor mediates various cellular responses, including inhibition of adenylate cyclase, breakdown of phosphoinositides and modulation of potassium channels through the action of G proteins. Primary transducing effect is inhibition of adenylate cyclase. The sequence is that of Muscarinic acetylcholine receptor M4 (chrm4) from Xenopus laevis (African clawed frog).